A 271-amino-acid polypeptide reads, in one-letter code: Isoprenyl transferase (271 aa).

Aspartate 35 is an active-site residue. Aspartate 35 is a binding site for Mg(2+). Substrate contacts are provided by residues 36-39, tryptophan 40, arginine 48, histidine 52, and 80-82; these read GNGR and STE. Asparagine 83 functions as the Proton acceptor in the catalytic mechanism. Substrate is bound by residues tryptophan 84, arginine 86, arginine 207, and 213–215; that span reads RIS. Residue glutamate 226 coordinates Mg(2+).

The protein belongs to the UPP synthase family. In terms of assembly, homodimer. Requires Mg(2+) as cofactor.

Catalyzes the condensation of isopentenyl diphosphate (IPP) with allylic pyrophosphates generating different type of terpenoids. This chain is Isoprenyl transferase, found in Enterococcus faecalis (strain ATCC 700802 / V583).